The primary structure comprises 351 residues: Succinylglutamate desuccinylase (351 aa).

Zn(2+)-binding residues include histidine 73, glutamate 76, and histidine 168. Glutamate 231 is a catalytic residue.

It belongs to the AspA/AstE family. Succinylglutamate desuccinylase subfamily. The cofactor is Zn(2+).

It carries out the reaction N-succinyl-L-glutamate + H2O = L-glutamate + succinate. Its pathway is amino-acid degradation; L-arginine degradation via AST pathway; L-glutamate and succinate from L-arginine: step 5/5. Functionally, transforms N(2)-succinylglutamate into succinate and glutamate. The protein is Succinylglutamate desuccinylase of Burkholderia lata (strain ATCC 17760 / DSM 23089 / LMG 22485 / NCIMB 9086 / R18194 / 383).